Reading from the N-terminus, the 349-residue chain is Terpene synthase 2 (349 aa).

A DDxx(x)D/E motif motif is present at residues 84-89 (DDLFDG). The NDxxSxxxD/E motif motif lies at 229–237 (NDCVSYEKE).

It belongs to the terpene synthase family.

It carries out the reaction (2E,6E)-farnesyl diphosphate = (3S)-(+)-asterisca-2(9),6-diene + diphosphate. The enzyme catalyses (2E)-geranyl diphosphate = (Z)-beta-ocimene + diphosphate. The catalysed reaction is (2E)-geranyl diphosphate + H2O = linalool + diphosphate. In terms of biological role, terpene synthase that converts its substrate farnesyl diphosphate (FPP) into the sesquiterpene (3S)-(+)-asterisca-2(9),6-diene. Is also able to convert geranyl diphosphate (GPP) into a mixture of monoterpenes including (Z)-beta-ocimene, allo-ocimene and linalool. The polypeptide is Terpene synthase 2 (Dictyostelium discoideum (Social amoeba)).